A 282-amino-acid chain; its full sequence is Protoheme IX farnesyltransferase (282 aa).

A run of 9 helical transmembrane segments spans residues 13-33 (VAGM…GAAG), 36-56 (MVTS…FNQI), 74-96 (ASGR…PALI), 101-120 (AGGV…YNGV), 129-149 (AFSL…GWLA), 156-176 (SPEI…HFWL), 207-227 (LWYA…FIAE), 232-252 (IAVC…LASP), and 261-281 (VSML…SGII).

Belongs to the UbiA prenyltransferase family. Protoheme IX farnesyltransferase subfamily.

It localises to the cell inner membrane. The enzyme catalyses heme b + (2E,6E)-farnesyl diphosphate + H2O = Fe(II)-heme o + diphosphate. It functions in the pathway porphyrin-containing compound metabolism; heme O biosynthesis; heme O from protoheme: step 1/1. In terms of biological role, converts heme B (protoheme IX) to heme O by substitution of the vinyl group on carbon 2 of heme B porphyrin ring with a hydroxyethyl farnesyl side group. This is Protoheme IX farnesyltransferase from Oleidesulfovibrio alaskensis (strain ATCC BAA-1058 / DSM 17464 / G20) (Desulfovibrio alaskensis).